We begin with the raw amino-acid sequence, 747 residues long: MSMAVDMSSKQPTKDFFSSPALSLSLAGIFRNASSGSTNPEEDFLGRRVVDDEDRTVEMSSENSGPTRSRSEEDLEGEDHDDEEEEEEDGAAGNKGTNKRKRKKYHRHTTDQIRHMEALFKETPHPDEKQRQQLSKQLGLAPRQVKFWFQNRRTQIKAIQERHENSLLKAELEKLREENKAMRESFSKANSSCPNCGGGPDDLHLENSKLKAELDKLRAALGRTPYPLQASCSDDQEHRLGSLDFYTGVFALEKSRIAEISNRATLELQKMATSGEPMWLRSVETGREILNYDEYLKEFPQAQASSFPGRKTIEASRDAGIVFMDAHKLAQSFMDVGQWKETFACLISKAATVDVIRQGEGPSRIDGAIQLMFGEMQLLTPVVPTREVYFVRSCRQLSPEKWAIVDVSVSVEDSNTEKEASLLKCRKLPSGCIIEDTSNGHSKVTWVEHLDVSASTVQPLFRSLVNTGLAFGARHWVATLQLHCERLVFFMATNVPTKDSLGVTTLAGRKSVLKMAQRMTQSFYRAIAASSYHQWTKITTKTGQDMRVSSRKNLHDPGEPTGVIVCASSSLWLPVSPALLFDFFRDEARRHEWDALSNGAHVQSIANLSKGQDRGNSVAIQTVKSREKSIWVLQDSSTNSYESVVVYAPVDINTTQLVLAGHDPSNIQILPSGFSIIPDGVESRPLVITSTQDDRNSQGGSLLTLALQTLINPSPAAKLNMESVESVTNLVSVTLHNIKRSLQIEDC.

A disordered region spans residues 31-112 (RNASSGSTNP…KKYHRHTTDQ (82 aa)). Residues 58 to 68 (EMSSENSGPTR) are compositionally biased toward polar residues. Over residues 73–90 (EDLEGEDHDDEEEEEEDG) the composition is skewed to acidic residues. The segment covering 97–107 (TNKRKRKKYHR) has biased composition (basic residues). The segment at residues 101-160 (KRKKYHRHTTDQIRHMEALFKETPHPDEKQRQQLSKQLGLAPRQVKFWFQNRRTQIKAIQ) is a DNA-binding region (homeobox). A coiled-coil region spans residues 155-223 (QIKAIQERHE…LDKLRAALGR (69 aa)). An START domain is found at 250 to 489 (FALEKSRIAE…LQLHCERLVF (240 aa)).

It belongs to the HD-ZIP homeobox family. Class IV subfamily. In terms of assembly, interacts with GIR1 and GIR2. As to expression, expressed in individual developing trichome cells of the emerging leaf primordia. Expressed in differentiating hairless cells of root epidermis.

The protein localises to the nucleus. In terms of biological role, transcription factor involved in the determination of epidermal cell identity. Required for correct morphological development and maturation of trichomes. Regulates the frequency of trichome initiation and determines trichome spacing. Acts as a negative factor for root hair development. Required for ectopic repression of root hair development in a subset of epidermal cells. May suppress hair formation in root epidermis by promoting differentiation into hairless epidermal cells. Directly suppresses the bHLH transcription factor genes, RHD6, RSL1, RSL2, LRL1, and LRL2, which have diverse functions in root hair development. Required for normal development of seed coat mucilage. Involved in the control of seed oil accumulation. Acts as a negative regulator of anthocyanin biosynthesis. May directly repress the expression of some component genes from the MYB-bHLH-WD40 (MBW) transcriptional activator complex. The MBW complex activates the transcription of late biosynthesis genes in the flavonoid pathway, leading to the production of anthocyanins. This is Homeobox-leucine zipper protein GLABRA 2 from Arabidopsis thaliana (Mouse-ear cress).